Consider the following 247-residue polypeptide: Mitochondrial inner membrane protease ATP23 (247 aa).

Residues 1-21 (MSVPPPPKEDLIKPNPPKSES) are disordered. His144 serves as a coordination point for a divalent metal cation. Residue Glu145 is part of the active site. A divalent metal cation is bound at residue His148.

It belongs to the peptidase M76 family.

The protein resides in the mitochondrion inner membrane. Its function is as follows. Has a dual role in the assembly of mitochondrial ATPase. Acts as a protease that removes N-terminal residues of mitochondrial ATPase CF(0) subunit 6 at the intermembrane space side. Also involved in the correct assembly of the membrane-embedded ATPase CF(0) particle, probably mediating association of subunit 6 with the subunit 9 ring. The polypeptide is Mitochondrial inner membrane protease ATP23 (ATP23) (Kluyveromyces lactis (strain ATCC 8585 / CBS 2359 / DSM 70799 / NBRC 1267 / NRRL Y-1140 / WM37) (Yeast)).